A 99-amino-acid chain; its full sequence is Integration host factor subunit alpha (99 aa).

Positions 49–73 (FGNFDLRDKNQRPGRNPKTGEDIPI) are disordered.

This sequence belongs to the bacterial histone-like protein family. In terms of assembly, heterodimer of an alpha and a beta chain.

In terms of biological role, this protein is one of the two subunits of integration host factor, a specific DNA-binding protein that functions in genetic recombination as well as in transcriptional and translational control. This Serratia marcescens protein is Integration host factor subunit alpha (ihfA).